Consider the following 317-residue polypeptide: uncharacterized protein (317 aa).

7 consecutive transmembrane segments (helical) span residues 18-38, 58-78, 92-112, 130-150, 159-179, 202-222, and 252-272; these read FWLISLVVAFLPLGLYGLVII, IILSWMLFFLWFNVIVNGFIF, FLGSFIYSGGNNFGGVSWWSF, LFSASFLLTTSSSIYELAWAV, LFHIKVQPISILLAVIFKLLP, CSFLNPFKIKTLFIPVLLSTV, and NLLNGVFLLVGLLLFSILLIA.

This sequence belongs to the CbiQ family.

Its subcellular location is the cell membrane. This is an uncharacterized protein from Mycoplasma genitalium (strain ATCC 33530 / DSM 19775 / NCTC 10195 / G37) (Mycoplasmoides genitalium).